The following is a 103-amino-acid chain: Matrix Gla protein (103 aa).

An N-terminal signal peptide occupies residues Met1–Cys19. A 4-carboxyglutamate modification is found at Glu21. A phosphoserine mark is found at Ser22, Ser25, and Ser28. The region spanning Arg51 to Arg97 is the Gla domain. A 4-carboxyglutamate mark is found at Glu56, Glu60, Glu67, and Glu71. A disulfide bridge links Cys73 with Cys79. The propeptide at Arg97–Lys103 is removed in mature form; probably by carboxypeptidase N.

It belongs to the osteocalcin/matrix Gla protein family. Requires vitamin K-dependent gamma-carboxylation for its function.

The protein localises to the secreted. Associates with the organic matrix of bone and cartilage. Thought to act as an inhibitor of bone formation. In Homo sapiens (Human), this protein is Matrix Gla protein (MGP).